The following is a 158-amino-acid chain: NAD(P)H-quinone oxidoreductase subunit N, organellar chromatophore (158 aa).

Belongs to the complex I NdhN subunit family. As to quaternary structure, NDH-1 can be composed of about 15 different subunits; different subcomplexes with different compositions have been identified which probably have different functions.

Its subcellular location is the plastid. The protein localises to the organellar chromatophore thylakoid membrane. It catalyses the reaction a plastoquinone + NADH + (n+1) H(+)(in) = a plastoquinol + NAD(+) + n H(+)(out). The enzyme catalyses a plastoquinone + NADPH + (n+1) H(+)(in) = a plastoquinol + NADP(+) + n H(+)(out). Its function is as follows. NDH-1 shuttles electrons from an unknown electron donor, via FMN and iron-sulfur (Fe-S) centers, to quinones in the respiratory and/or the photosynthetic chain. The immediate electron acceptor for the enzyme in this species is believed to be plastoquinone. Couples the redox reaction to proton translocation, and thus conserves the redox energy in a proton gradient. The polypeptide is NAD(P)H-quinone oxidoreductase subunit N, organellar chromatophore (Paulinella chromatophora).